The chain runs to 101 residues: MIPGELVIDDGEHTLNAGRHTIALVVANTGDRPVQVGSHYHFHEVNDALSFDRAAARGFRLNIAAGTAVRFEPGQTRTVELVELGGARAVYGFQGKVMGPL.

This sequence belongs to the urease beta subunit family. Heterotrimer of UreA (gamma), UreB (beta) and UreC (alpha) subunits. Three heterotrimers associate to form the active enzyme.

It is found in the cytoplasm. It catalyses the reaction urea + 2 H2O + H(+) = hydrogencarbonate + 2 NH4(+). It participates in nitrogen metabolism; urea degradation; CO(2) and NH(3) from urea (urease route): step 1/1. The chain is Urease subunit beta from Burkholderia mallei (strain NCTC 10247).